Consider the following 58-residue polypeptide: LICYNDHGYIGETSESCKNGETTCYEEXWTEARXXIIERACGCXKVKPGVQMKCCKTQ.

3 disulfide bridges follow: Cys3/Cys24, Cys17/Cys41, and Cys43/Cys54.

Expressed by the venom gland.

The protein localises to the secreted. Functionally, binds to muscle nicotinic acetylcholine receptor (nAChR) and inhibit acetylcholine from binding to the receptor, thereby impairing neuromuscular transmission. This chain is Weak neurotoxin D2B, found in Micrurus pyrrhocryptus (Coral snake).